Consider the following 1295-residue polypeptide: MMEILRGSPALSAFRINKLLARFQAARLLVHTIYAEYVHFADLNAPLNDDEHAQLERLLKYGPALASHAPQGKLLLVTPRPGTISPWSSKATDIAHNCGLQQVNRLERGVAYYIEAGTLTNEQWQQVTAELHDRMMETVFFALDDAEQLFAHHQPTPVTSVDLLGQGRQALIDANLRLGLALAEDEIDYLQDAFTRLGRNPNDIELYMFAQANSEHCRHKIFNADWVIDGEQQPKSLFKMIKNTFETTPDHVLSAYKDNAAVMEGSEVGRYFADHETGRYDFHQEPAHILMKVETHNHPTAISPWPGAATGSGGEIRDEGATGRGAKPKAGLVGFSVSNLRIPGFEQPWEEDFGKPERIVTALDIMTEGPLGGAAFNNEFGRPALNGYFRTYEEKVNSHNGEELRGYHKPIMLAGGIGNIRADHVQKGEINVGAKLVVLGGPAMNIGLGGGAASSMASGQSDADLDFASVQRDNPEMERRCQEVIDRCWQLGDANPILFIHDVGAGGLSNAMPELVSDGGRGGKFELRDILSDEPGMSPLEIWCNESQERYVLAVAADQLPLFDELCKRERAPYAVIGEATEELHLSLHDRHFDNQPIDLPLDVLLGKTPKMTRDVQTLKAKGDALAREGITIADAVKRVLHLPTVAEKTFLVTIGDRSVTGMVARDQMVGPWQVPVANCAVTTASLDSYYGEAMAIGERAPVALLDFAASARLAVGEALTNIAATQIGDIKRIKLSANWMAAAGHPGEDAGLYEAVKAVGEELCPALGLTIPVGKDSMSMKTRWQEGNEEREMTSPLSLVISAFARVEDVRHTITPQLSTEDNALLLIDLGKGNNALGATALAQVYRQLGDKPADVRDVAQLKGFYDAIQALVAQRKLLAYHDRSDGGLLVTLAEMAFAGHCGIDADIATLGDDRLAALFNEELGAVIQVRAADREAVEAVLAQHGLADCVHYVGQAVSGDRFVITANGQTVFSESRTTLRVWWAETTWQMQRLRDNPECADQEHQAKSNDADPGLNVKLSFDINEDVAAPFIATGARPKVAVLREQGVNSHVEMAAAFHRAGFDAIDVHMSDLLAGRTGLEGFHVLVACGGFSYGDVLGAGEGWAKSILFNDRVRDEFATFFHRPQTLALGVCNGCQMMSNLRELIPGSELWPRFVRNTSDRFEARFSLVEVTQSPSLLLQGMVGSQMPIAVSHGEGRVEVRDAAHLAALESKGLVALRYVDNFGKVTETYPANPNGSPNGITAVTTESGRVTIMMPHPERVFRTVSNSWHPENWGEDGPWMRIFRNARKQLG.

A disordered region spans residues 305-327; the sequence is WPGAATGSGGEIRDEGATGRGAK. Residues 307-318 and alanine 678 each bind ATP; that span reads GAATGSGGEIRD. Mg(2+) contacts are provided by glutamate 718, asparagine 722, and aspartate 884. ATP is bound at residue serine 886. Residues 1042–1295 enclose the Glutamine amidotransferase type-1 domain; sequence VAVLREQGVN…IFRNARKQLG (254 aa). Cysteine 1135 acts as the Nucleophile in catalysis. Catalysis depends on residues histidine 1260 and glutamate 1262.

The protein in the N-terminal section; belongs to the FGAMS family. In terms of assembly, monomer.

The protein resides in the cytoplasm. The enzyme catalyses N(2)-formyl-N(1)-(5-phospho-beta-D-ribosyl)glycinamide + L-glutamine + ATP + H2O = 2-formamido-N(1)-(5-O-phospho-beta-D-ribosyl)acetamidine + L-glutamate + ADP + phosphate + H(+). It functions in the pathway purine metabolism; IMP biosynthesis via de novo pathway; 5-amino-1-(5-phospho-D-ribosyl)imidazole from N(2)-formyl-N(1)-(5-phospho-D-ribosyl)glycinamide: step 1/2. Phosphoribosylformylglycinamidine synthase involved in the purines biosynthetic pathway. Catalyzes the ATP-dependent conversion of formylglycinamide ribonucleotide (FGAR) and glutamine to yield formylglycinamidine ribonucleotide (FGAM) and glutamate. This Escherichia coli (strain UTI89 / UPEC) protein is Phosphoribosylformylglycinamidine synthase.